A 185-amino-acid chain; its full sequence is Ribosome-recycling factor (185 aa).

Residues 138 to 179 (TLKRQEKNGDITEDEQRSLEKQVQKVTDDATKEIDKLADQKS) are compositionally biased toward basic and acidic residues. The disordered stretch occupies residues 138–185 (TLKRQEKNGDITEDEQRSLEKQVQKVTDDATKEIDKLADQKSQEITQG).

This sequence belongs to the RRF family.

The protein localises to the cytoplasm. Functionally, responsible for the release of ribosomes from messenger RNA at the termination of protein biosynthesis. May increase the efficiency of translation by recycling ribosomes from one round of translation to another. The chain is Ribosome-recycling factor from Lactobacillus gasseri (strain ATCC 33323 / DSM 20243 / BCRC 14619 / CIP 102991 / JCM 1131 / KCTC 3163 / NCIMB 11718 / NCTC 13722 / AM63).